The sequence spans 600 residues: NADH-quinone oxidoreductase subunit C/D (600 aa).

The segment at 1 to 190 (MVNNMTDLTA…SPFELTKAKQ (190 aa)) is NADH dehydrogenase I subunit C. The interval 214–600 (DFMFLNLGPN…IDFVMSDVDR (387 aa)) is NADH dehydrogenase I subunit D.

It in the N-terminal section; belongs to the complex I 30 kDa subunit family. The protein in the C-terminal section; belongs to the complex I 49 kDa subunit family. As to quaternary structure, NDH-1 is composed of 13 different subunits. Subunits NuoB, CD, E, F, and G constitute the peripheral sector of the complex.

It localises to the cell inner membrane. It carries out the reaction a quinone + NADH + 5 H(+)(in) = a quinol + NAD(+) + 4 H(+)(out). In terms of biological role, NDH-1 shuttles electrons from NADH, via FMN and iron-sulfur (Fe-S) centers, to quinones in the respiratory chain. The immediate electron acceptor for the enzyme in this species is believed to be ubiquinone. Couples the redox reaction to proton translocation (for every two electrons transferred, four hydrogen ions are translocated across the cytoplasmic membrane), and thus conserves the redox energy in a proton gradient. This is NADH-quinone oxidoreductase subunit C/D from Shigella boydii serotype 18 (strain CDC 3083-94 / BS512).